Reading from the N-terminus, the 71-residue chain is Exodeoxyribonuclease 7 small subunit (71 aa).

The protein belongs to the XseB family. Heterooligomer composed of large and small subunits.

It is found in the cytoplasm. It catalyses the reaction Exonucleolytic cleavage in either 5'- to 3'- or 3'- to 5'-direction to yield nucleoside 5'-phosphates.. Its function is as follows. Bidirectionally degrades single-stranded DNA into large acid-insoluble oligonucleotides, which are then degraded further into small acid-soluble oligonucleotides. The polypeptide is Exodeoxyribonuclease 7 small subunit (Clostridium botulinum (strain Kyoto / Type A2)).